The primary structure comprises 721 residues: Mitogen-activated protein kinase 6 (721 aa).

M1 is covalently cross-linked (Peptide (Met-Gly) (interchain with G-Cter in ubiquitin)). The Protein kinase domain maps to 20 to 316; it reads YMDLKPLGCG…AEEALSHPYM (297 aa). ATP is bound by residues 26 to 34 and K49; that span reads LGCGGNGLV. D152 serves as the catalytic Proton acceptor. A Phosphoserine; by PAK1, PAK2 and PAK3 modification is found at S189. Positions 189 to 191 match the SEG motif motif; it reads SEG. The FRIEDE motif motif lies at 332–337; sequence FHIEDE. Phosphoserine is present on residues S386, S452, S556, S558, S665, and S684. The span at 701-715 shows a compositional bias: polar residues; sequence AMKSSPQIPHQTYSS. Positions 701–721 are disordered; it reads AMKSSPQIPHQTYSSILKHLN.

This sequence belongs to the protein kinase superfamily. CMGC Ser/Thr protein kinase family. MAP kinase subfamily. As to quaternary structure, heterodimer with ERK4/MAPK4. Interacts with (via FRIEDE motif) MAPKAPK5. Interacts with UBE3A; this interaction may be indirect and mediated by HERC2, possibly via HERC2 interaction with NEURL4. The cofactor is Mg(2+). In terms of processing, phosphorylated at Ser-189 by PAK1, PAK2 and PAK3 resulting in catalytic activation. Phosphorylated by MAPKAPK5 at other sites. Ubiquitination at Met-1 leads to degradation by the proteasome pathway. Highest expression in the skeletal muscle, followed by the brain. Also found in heart, placenta, lung, liver, pancreas, kidney and skin fibroblasts.

The protein resides in the cytoplasm. It localises to the nucleus. It catalyses the reaction L-seryl-[protein] + ATP = O-phospho-L-seryl-[protein] + ADP + H(+). It carries out the reaction L-threonyl-[protein] + ATP = O-phospho-L-threonyl-[protein] + ADP + H(+). With respect to regulation, activated by phosphorylation at Ser-189. Atypical MAPK protein. Phosphorylates microtubule-associated protein 2 (MAP2) and MAPKAPK5. The precise role of the complex formed with MAPKAPK5 is still unclear, but the complex follows a complex set of phosphorylation events: upon interaction with atypical MAPKAPK5, ERK3/MAPK6 is phosphorylated at Ser-189 and then mediates phosphorylation and activation of MAPKAPK5, which in turn phosphorylates ERK3/MAPK6. May promote entry in the cell cycle. This chain is Mitogen-activated protein kinase 6 (MAPK6), found in Homo sapiens (Human).